Consider the following 464-residue polypeptide: Citrate synthase, mitochondrial (464 aa).

The N-terminal 27 residues, 1–27, are a transit peptide targeting the mitochondrion; the sequence is MALLTAATRLLGAKNSSCLVLAARHAS. Residues 2 to 21 carry the SIFI-degron motif; that stretch reads ALLTAATRLLGAKNSSCLVL. Lys57 is subject to N6-succinyllysine. Position 76 is an N6-acetyllysine; alternate (Lys76). Residue Lys76 is modified to N6-succinyllysine; alternate. N6-succinyllysine occurs at positions 103 and 193. A Phosphoserine modification is found at Ser226. His301 is an active-site residue. An N6-acetyllysine; alternate mark is found at Lys321 and Lys327. N6-succinyllysine; alternate is present on residues Lys321 and Lys327. Residue His347 is part of the active site. An oxaloacetate-binding site is contributed by Arg356. Lys375 carries the N6-acetyllysine; alternate modification. Lys375 bears the N6-succinyllysine; alternate mark. N6-acetyllysine is present on Lys382. Lys393 bears the N6-acetyllysine; alternate mark. At Lys393 the chain carries N6-succinyllysine; alternate. The residue at position 395 (Lys395) is an N6,N6,N6-trimethyllysine. Asp402 is a catalytic residue. Residues Arg428 and Arg448 each contribute to the oxaloacetate site. N6-succinyllysine is present on Lys450. Lys459 bears the N6-acetyllysine; alternate mark. Position 459 is an N6-succinyllysine; alternate (Lys459).

The protein belongs to the citrate synthase family. Homodimer. Methylated. Trimethylation at Lys-395 by CSKMT decreases citrate synthase activity. In terms of processing, in response to mitochondrial stress, the precursor protein is ubiquitinated by the SIFI complex in the cytoplasm before mitochondrial import, leading to its degradation. Within the SIFI complex, UBR4 initiates ubiquitin chain that are further elongated or branched by KCMF1.

It is found in the mitochondrion matrix. The catalysed reaction is oxaloacetate + acetyl-CoA + H2O = citrate + CoA + H(+). It participates in carbohydrate metabolism; tricarboxylic acid cycle; isocitrate from oxaloacetate: step 1/2. In terms of biological role, key enzyme of the Krebs tricarboxylic acid cycle which catalyzes the synthesis of citrate from acetyl coenzyme A and oxaloacetate. This chain is Citrate synthase, mitochondrial (Cs), found in Mus musculus (Mouse).